A 171-amino-acid chain; its full sequence is uncharacterized protein (171 aa).

A disordered region spans residues 123–171 (CTKRDLRNDPPPAYQPDDPLKDLRKNFEKKEKPTWNDVEKKKNGVFEFH). Positions 140–171 (DPLKDLRKNFEKKEKPTWNDVEKKKNGVFEFH) are enriched in basic and acidic residues.

This is an uncharacterized protein from Caenorhabditis elegans.